The primary structure comprises 118 residues: Ig heavy chain V region AC38 205.12 (118 aa).

The segment at 1–98 (EVQLQQSGPE…EDSAVYYCAR (98 aa)) is v segment. The cysteines at positions 22 and 96 are disulfide-linked. The interval 99–104 (GYGYDP) is d segment. The j segment stretch occupies residues 105-118 (FDVWGTGTTVTVSS).

The chain is Ig heavy chain V region AC38 205.12 from Mus musculus (Mouse).